The primary structure comprises 149 residues: Protein NrdI (149 aa).

Belongs to the NrdI family.

In terms of biological role, probably involved in ribonucleotide reductase function. The protein is Protein NrdI of Malacoplasma penetrans (strain HF-2) (Mycoplasma penetrans).